The sequence spans 67 residues: MTTYDRNRNAITTGSRVMVSGTGHTGKILSIDTEGLTAEQIRRGKTVVVEGCEEKLAPLDLIRLGMN.

C52 is modified (S-selanylcysteine).

This is Putative selenoprotein YdfZ (ydfZ) from Escherichia coli O6:H1 (strain CFT073 / ATCC 700928 / UPEC).